The sequence spans 179 residues: Large ribosomal subunit protein bL9 (179 aa).

Belongs to the bacterial ribosomal protein bL9 family.

Binds to the 23S rRNA. This chain is Large ribosomal subunit protein bL9, found in Bartonella bacilliformis (strain ATCC 35685 / KC583 / Herrer 020/F12,63).